We begin with the raw amino-acid sequence, 637 residues long: 1-deoxy-D-xylulose-5-phosphate synthase (637 aa).

Thiamine diphosphate is bound by residues His76 and 117–119 (AHS). Residue Asp148 participates in Mg(2+) binding. Thiamine diphosphate-binding positions include 149 to 150 (GA), Asn177, Tyr287, and Glu369. Residue Asn177 coordinates Mg(2+).

This sequence belongs to the transketolase family. DXPS subfamily. In terms of assembly, homodimer. Mg(2+) serves as cofactor. Requires thiamine diphosphate as cofactor.

The enzyme catalyses D-glyceraldehyde 3-phosphate + pyruvate + H(+) = 1-deoxy-D-xylulose 5-phosphate + CO2. It functions in the pathway metabolic intermediate biosynthesis; 1-deoxy-D-xylulose 5-phosphate biosynthesis; 1-deoxy-D-xylulose 5-phosphate from D-glyceraldehyde 3-phosphate and pyruvate: step 1/1. In terms of biological role, catalyzes the acyloin condensation reaction between C atoms 2 and 3 of pyruvate and glyceraldehyde 3-phosphate to yield 1-deoxy-D-xylulose-5-phosphate (DXP). In Pelagibacter ubique (strain HTCC1062), this protein is 1-deoxy-D-xylulose-5-phosphate synthase.